The primary structure comprises 175 residues: Zinc finger protein ZAT18 (175 aa).

2 C2H2-type zinc fingers span residues 49–71 and 93–115; these read FECK…RASH and HKCT…MRKH. A Nuclear localization signal motif is present at residues 71–78; it reads HKKPKLIV. The EAR-like (transcriptional repression) signature appears at 146 to 152; it reads LDLNLTP.

As to expression, mostly expressed in stems, siliques and leaves, and, to a lower extent, in cotyledons, hypocotyls and roots.

It localises to the nucleus. Functionally, transcription factor involved in stress responses. Positive regulator of the jasmonic acid (JA)- mediated signaling pathway. Triggers the up-regulation of LOX3, VSP2, PAL1 and PAL2 in a JA-dependent manner. Promotes drought and osmotic stress tolerance by preventing reactive oxygen species (ROS) production (e.g. H(2)O(2)). The polypeptide is Zinc finger protein ZAT18 (Arabidopsis thaliana (Mouse-ear cress)).